Here is a 214-residue protein sequence, read N- to C-terminus: Guanylate kinase (214 aa).

One can recognise a Guanylate kinase-like domain in the interval glycine 12–alanine 191. Position 19–26 (serine 19–threonine 26) interacts with ATP.

This sequence belongs to the guanylate kinase family.

It is found in the cytoplasm. The catalysed reaction is GMP + ATP = GDP + ADP. Its function is as follows. Essential for recycling GMP and indirectly, cGMP. This is Guanylate kinase from Paramagnetospirillum magneticum (strain ATCC 700264 / AMB-1) (Magnetospirillum magneticum).